Reading from the N-terminus, the 485-residue chain is Glutamyl-tRNA(Gln) amidotransferase subunit A (485 aa).

Active-site charge relay system residues include lysine 78 and serine 153. Residue serine 177 is the Acyl-ester intermediate of the active site.

The protein belongs to the amidase family. GatA subfamily. Heterotrimer of A, B and C subunits.

It catalyses the reaction L-glutamyl-tRNA(Gln) + L-glutamine + ATP + H2O = L-glutaminyl-tRNA(Gln) + L-glutamate + ADP + phosphate + H(+). In terms of biological role, allows the formation of correctly charged Gln-tRNA(Gln) through the transamidation of misacylated Glu-tRNA(Gln) in organisms which lack glutaminyl-tRNA synthetase. The reaction takes place in the presence of glutamine and ATP through an activated gamma-phospho-Glu-tRNA(Gln). The polypeptide is Glutamyl-tRNA(Gln) amidotransferase subunit A (Bacillus cereus (strain Q1)).